The following is an 802-amino-acid chain: E3 ubiquitin-protein ligase UHRF2 (802 aa).

The Ubiquitin-like domain maps to 1–78 (MWIQVRTIDG…IQLLVRPDPD (78 aa)). Disordered regions lie at residues 80–116 (LPGTSTQIEAKPCSNSPPKVKKAPRVGPSNQPSTSAR) and 153–197 (RASD…STSN). Polar residues-rich tracts occupy residues 82-96 (GTSTQIEAKPCSNSP), 153-177 (RASDGQSRGKTPLKNGSSCKRTNGN), and 188-197 (KLDSVPSTSN). The required for interaction with histone H3 stretch occupies residues 117–311 (ARLIDPGFGI…VDEIFKIERP (195 aa)). The tract at residues 194–288 (STSNSDCVAA…KELRVKIFLG (95 aa)) is interaction with PCNP. A PHD-type zinc finger spans residues 344–395 (SCSCRVCGGKHEPNMQLLCDECNVAYHIYCLNPPLDKVPEEEYWYCPSCKTD). The segment at 414–644 (KMPSASTESR…LQYPAGYPSD (231 aa)) is methyl-CpG binding and interaction with HDAC1. The YDG domain occupies 448 to 612 (GPIPGIPVGS…FLVWRYLLRR (165 aa)). Residues 640 to 674 (GYPSDKEGKKPKGQSKKQPSGTTKRPISDDDCPSA) are disordered. Ser667 is modified (phosphoserine). Residues 733–772 (CVCCQELVYQPVTTECFHNVCKDCLQRSFKAQVFSCPACR) form an RING-type zinc finger.

As to quaternary structure, homodimer; disulfide-linked. Binds methylated CpG containing oligonucleotides. Interacts with H3; the interaction has a preference for the 'Lys-9' trimethylated form of H3 (H3K9me3). Interacts with PCNP. Interacts with HDAC1. Interacts directly with CCNE1; the interaction ubiquitinates CCNE1 and appears independent of CCNE1 phosphorylation. Interacts with CCND1; the interaction ubiquitinates CCND1 and appears independent of CCND1 phosphorylation. Interacts with p53/TP53 and RB1. Interacts with UBE2I. Interacts with ZNF618. Interacts with UHRF1. Interacts with FANCD2. Interacts with ATR. Interacts with PCNA. Post-translationally, may be autoubiquitinated; which may lead to proteasomal degradation. Phosphorylated. Phosphorylation may be mediated by CDK2. In terms of processing, autosumoylated.

The protein resides in the nucleus. It is found in the chromosome. It carries out the reaction S-ubiquitinyl-[E2 ubiquitin-conjugating enzyme]-L-cysteine + [acceptor protein]-L-lysine = [E2 ubiquitin-conjugating enzyme]-L-cysteine + N(6)-ubiquitinyl-[acceptor protein]-L-lysine.. The protein operates within protein modification; protein ubiquitination. Its activity is regulated as follows. E3 ligase activity is robustly activated by 5-hydroxymethylcytosine. Functionally, E3 ubiquitin ligase that plays important roles in DNA methylation, histone modifications, cell cycle and DNA repair. Acts as a specific reader for 5-hydroxymethylcytosine (5hmC) and thereby recruits various substrates to these sites to ubiquitinate them. This activity also allows the maintenance of 5mC levels at specific genomic loci and regulates neuron-related gene expression. Participates in cell cycle regulation by ubiquitinating cyclins CCND1 and CCNE1 and thereby inducing G1 arrest. Also ubiquitinates PCNP leading to its degradation by the proteasome. Plays an active role in DNA damage repair by ubiquitinating p21/CDKN1A leading to its proteasomal degradation. Also promotes DNA repair by acting as an interstrand cross-links (ICLs) sensor. Mechanistically, cooperates with UHRF1 to ensure recruitment of FANCD2 to ICLs, leading to FANCD2 monoubiquitination and subsequent activation. Contributes to UV-induced DNA damage response by physically interacting with ATR in response to irradiation, thereby promoting ATR activation. The polypeptide is E3 ubiquitin-protein ligase UHRF2 (UHRF2) (Homo sapiens (Human)).